The chain runs to 674 residues: DNA ligase (674 aa).

Residues 42-46, 91-92, and glutamate 121 each bind NAD(+); these read DNVYD and SM. Lysine 123 (N6-AMP-lysine intermediate) is an active-site residue. NAD(+) is bound by residues arginine 144, glutamate 178, lysine 294, and lysine 318. Cysteine 412, cysteine 415, cysteine 430, and cysteine 435 together coordinate Zn(2+). Positions 596–674 constitute a BRCT domain; that stretch reads VKDSFVAGKT…ETELLANLKD (79 aa).

Belongs to the NAD-dependent DNA ligase family. LigA subfamily. It depends on Mg(2+) as a cofactor. Requires Mn(2+) as cofactor.

It carries out the reaction NAD(+) + (deoxyribonucleotide)n-3'-hydroxyl + 5'-phospho-(deoxyribonucleotide)m = (deoxyribonucleotide)n+m + AMP + beta-nicotinamide D-nucleotide.. DNA ligase that catalyzes the formation of phosphodiester linkages between 5'-phosphoryl and 3'-hydroxyl groups in double-stranded DNA using NAD as a coenzyme and as the energy source for the reaction. It is essential for DNA replication and repair of damaged DNA. This chain is DNA ligase, found in Lacticaseibacillus casei (strain BL23) (Lactobacillus casei).